The primary structure comprises 334 residues: MIEADRLIQPQLQGQDDVIDRAMRPKLLDEYTGQDDTRAQLKVFIQAAKNREEALDHMLIYGPPGLGKTTLAMIVANEMGVNIKSTSGPVLEKAGDLAALLTNLEAGDVLFIDEIHRLSPVVEEILYPAMEDYQLDIMIGEGPAARSIKLDLPPFTLVGATTRAGALTSPLRARFGIPLRLEFYNVKDLSTIVTRSAQVMGLAIDSEGATEIAKRSRGTPRIANRLLRRVRDYAEVKHDGAVTKKVAEHALDLLDVDGEGFDYMDRKLLLAIIDKFMGGPVGLDNLAAAIGEERETIEDVLEPFLIQQGFIQRTPRGRIATTRAYLHFGMIKPE.

Residues 4–184 form a large ATPase domain (RuvB-L) region; the sequence is ADRLIQPQLQ…FGIPLRLEFY (181 aa). Residues Arg-24, Gly-65, Lys-68, Thr-69, Thr-70, 131 to 133, Arg-174, Tyr-184, and Arg-221 each bind ATP; that span reads EDY. Thr-69 contributes to the Mg(2+) binding site. Positions 185–255 are small ATPAse domain (RuvB-S); the sequence is NVKDLSTIVT…VAEHALDLLD (71 aa). A head domain (RuvB-H) region spans residues 258-334; that stretch reads GEGFDYMDRK…YLHFGMIKPE (77 aa). Positions 294, 313, and 318 each coordinate DNA.

It belongs to the RuvB family. Homohexamer. Forms an RuvA(8)-RuvB(12)-Holliday junction (HJ) complex. HJ DNA is sandwiched between 2 RuvA tetramers; dsDNA enters through RuvA and exits via RuvB. An RuvB hexamer assembles on each DNA strand where it exits the tetramer. Each RuvB hexamer is contacted by two RuvA subunits (via domain III) on 2 adjacent RuvB subunits; this complex drives branch migration. In the full resolvosome a probable DNA-RuvA(4)-RuvB(12)-RuvC(2) complex forms which resolves the HJ.

It localises to the cytoplasm. It carries out the reaction ATP + H2O = ADP + phosphate + H(+). In terms of biological role, the RuvA-RuvB-RuvC complex processes Holliday junction (HJ) DNA during genetic recombination and DNA repair, while the RuvA-RuvB complex plays an important role in the rescue of blocked DNA replication forks via replication fork reversal (RFR). RuvA specifically binds to HJ cruciform DNA, conferring on it an open structure. The RuvB hexamer acts as an ATP-dependent pump, pulling dsDNA into and through the RuvAB complex. RuvB forms 2 homohexamers on either side of HJ DNA bound by 1 or 2 RuvA tetramers; 4 subunits per hexamer contact DNA at a time. Coordinated motions by a converter formed by DNA-disengaged RuvB subunits stimulates ATP hydrolysis and nucleotide exchange. Immobilization of the converter enables RuvB to convert the ATP-contained energy into a lever motion, pulling 2 nucleotides of DNA out of the RuvA tetramer per ATP hydrolyzed, thus driving DNA branch migration. The RuvB motors rotate together with the DNA substrate, which together with the progressing nucleotide cycle form the mechanistic basis for DNA recombination by continuous HJ branch migration. Branch migration allows RuvC to scan DNA until it finds its consensus sequence, where it cleaves and resolves cruciform DNA. In Shewanella sp. (strain MR-4), this protein is Holliday junction branch migration complex subunit RuvB.